The following is a 404-amino-acid chain: Floricaula/leafy-like protein FL1 (404 aa).

The disordered stretch occupies residues 210 to 251; sequence IGVPEHSSESDERKADTNKQKRRRSKEPGEDGEDRPREHPFI. Composition is skewed to basic and acidic residues over residues 215–228 and 235–249; these read HSSESDERKADTNK and KEPGEDGEDRPREHP. 3 DNA-binding regions span residues 246-250, 315-322, and 386-389; these read REHPF, NKPKMRHY, and YVPT.

Belongs to the FLO/LFY family. As to expression, expressed in both male and female cones, vegetative buds and needles, but not in the roots.

The protein resides in the nucleus. Functionally, probable transcription factor. In Pinus radiata (Monterey pine), this protein is Floricaula/leafy-like protein FL1.